Reading from the N-terminus, the 230-residue chain is Large ribosomal subunit protein uL1 (230 aa).

Belongs to the universal ribosomal protein uL1 family. Part of the 50S ribosomal subunit.

Functionally, binds directly to 23S rRNA. The L1 stalk is quite mobile in the ribosome, and is involved in E site tRNA release. In terms of biological role, protein L1 is also a translational repressor protein, it controls the translation of the L11 operon by binding to its mRNA. The chain is Large ribosomal subunit protein uL1 from Bradyrhizobium diazoefficiens (strain JCM 10833 / BCRC 13528 / IAM 13628 / NBRC 14792 / USDA 110).